Consider the following 143-residue polypeptide: Histone H2B.2, sperm (143 aa).

A disordered region spans residues 1–49 (MPKSPSKSSPRKGSPRKGSPRKGSPKRGGKGAKRAGKGGRRNVVKRRRR). 5 consecutive short sequence motifs (SPKK motif) follow at residues 4 to 7 (SPSK), 9 to 12 (SPRK), 14 to 17 (SPRK), 19 to 22 (SPRK), and 24 to 27 (SPKR). Over residues 9–49 (SPRKGSPRKGSPRKGSPKRGGKGAKRAGKGGRRNVVKRRRR) the composition is skewed to basic residues. 3 positions are modified to phosphoserine: Ser14, Ser19, and Ser24. An O-linked (GlcNAc) serine glycan is attached at Ser129. Residue Lys137 forms a Glycyl lysine isopeptide (Lys-Gly) (interchain with G-Cter in ubiquitin) linkage.

This sequence belongs to the histone H2B family. In terms of assembly, the nucleosome is a histone octamer containing two molecules each of H2A, H2B, H3 and H4 assembled in one H3-H4 heterotetramer and two H2A-H2B heterodimers. The octamer wraps approximately 147 bp of DNA. In terms of processing, monoubiquitination of Lys-137 gives a specific tag for epigenetic transcriptional activation and is also prerequisite for histone H3 'Lys-4' and 'Lys-79' methylation. Post-translationally, phosphorylated on SPKK motifs 3, 4 and 5; which may regulate DNA binding. Dephosphorylated during maturation of spermatids to mature sperm and rephosphorylated at fertilization. GlcNAcylation at Ser-129 promotes monoubiquitination of Lys-137. It fluctuates in response to extracellular glucose, and associates with transcribed genes.

Its subcellular location is the nucleus. The protein localises to the chromosome. Functionally, core component of nucleosome. Nucleosomes wrap and compact DNA into chromatin, limiting DNA accessibility to the cellular machineries which require DNA as a template. Histones thereby play a central role in transcription regulation, DNA repair, DNA replication and chromosomal stability. DNA accessibility is regulated via a complex set of post-translational modifications of histones, also called histone code, and nucleosome remodeling. The chain is Histone H2B.2, sperm from Psammechinus miliaris (Green sea urchin).